A 360-amino-acid polypeptide reads, in one-letter code: D-alanine--D-alanine ligase (360 aa).

The ATP-grasp domain maps to 149–353 (KKLMAAEGLP…YEELLDVLVQ (205 aa)). 176–231 (KNLLGLPVFVKPARGGSSIGISRVTAWEDFNKAVGLARAHDEKVIVESEIVGSEVE) lines the ATP pocket. Asp-308, Glu-320, and Asn-322 together coordinate Mg(2+).

The protein belongs to the D-alanine--D-alanine ligase family. Requires Mg(2+) as cofactor. Mn(2+) is required as a cofactor.

It localises to the cytoplasm. The catalysed reaction is 2 D-alanine + ATP = D-alanyl-D-alanine + ADP + phosphate + H(+). It participates in cell wall biogenesis; peptidoglycan biosynthesis. Cell wall formation. This Corynebacterium glutamicum (strain ATCC 13032 / DSM 20300 / JCM 1318 / BCRC 11384 / CCUG 27702 / LMG 3730 / NBRC 12168 / NCIMB 10025 / NRRL B-2784 / 534) protein is D-alanine--D-alanine ligase.